Reading from the N-terminus, the 633-residue chain is DNA-directed RNA polymerase subunit gamma (633 aa).

Positions 74, 76, 89, and 92 each coordinate Zn(2+). 3 residues coordinate Mg(2+): D471, D473, and D475.

Belongs to the RNA polymerase beta' chain family. RpoC1 subfamily. In cyanobacteria the RNAP catalytic core is composed of 2 alpha, 1 beta, 1 beta', 1 gamma and 1 omega subunit. When a sigma factor is associated with the core the holoenzyme is formed, which can initiate transcription. Requires Mg(2+) as cofactor. Zn(2+) serves as cofactor.

The catalysed reaction is RNA(n) + a ribonucleoside 5'-triphosphate = RNA(n+1) + diphosphate. Functionally, DNA-dependent RNA polymerase catalyzes the transcription of DNA into RNA using the four ribonucleoside triphosphates as substrates. The chain is DNA-directed RNA polymerase subunit gamma from Prochlorococcus marinus (strain MIT 9211).